The following is a 436-amino-acid chain: Probable cinnamyl alcohol dehydrogenase 8B (436 aa).

Position 120 (cysteine 120) interacts with Zn(2+). Threonine 122 lines the NADP(+) pocket. Zn(2+) is bound by residues histidine 142, glutamate 143, cysteine 173, cysteine 176, cysteine 179, cysteine 187, and cysteine 236. NADP(+) is bound by residues threonine 240, 261-266 (GLGGLG), 284-289 (STSPGK), threonine 324, glycine 348, and 371-373 (NCV).

This sequence belongs to the zinc-containing alcohol dehydrogenase family. As to quaternary structure, homodimer. Zn(2+) is required as a cofactor.

The catalysed reaction is (E)-cinnamyl alcohol + NADP(+) = (E)-cinnamaldehyde + NADPH + H(+). The enzyme catalyses (E)-coniferol + NADP(+) = (E)-coniferaldehyde + NADPH + H(+). It catalyses the reaction (E)-sinapyl alcohol + NADP(+) = (E)-sinapaldehyde + NADPH + H(+). It carries out the reaction (E)-4-coumaroyl alcohol + NADP(+) = (E)-4-coumaraldehyde + NADPH + H(+). The catalysed reaction is (E)-caffeyl alcohol + NADP(+) = (E)-caffeyl aldehyde + NADPH + H(+). Its pathway is aromatic compound metabolism; phenylpropanoid biosynthesis. Involved in lignin biosynthesis. Catalyzes the final step specific for the production of lignin monomers. Catalyzes the NADPH-dependent reduction of coniferaldehyde, 5-hydroxyconiferaldehyde, sinapaldehyde, 4-coumaraldehyde and caffeyl aldehyde to their respective alcohols. The sequence is that of Probable cinnamyl alcohol dehydrogenase 8B from Oryza sativa subsp. japonica (Rice).